We begin with the raw amino-acid sequence, 146 residues long: Putative pre-16S rRNA nuclease (146 aa).

It belongs to the YqgF nuclease family.

It is found in the cytoplasm. In terms of biological role, could be a nuclease involved in processing of the 5'-end of pre-16S rRNA. This Pseudomonas syringae pv. syringae (strain B728a) protein is Putative pre-16S rRNA nuclease.